The sequence spans 1336 residues: MHIHSDLSLPQFEHASIDPPSYSPQKSSFEEKKHNFSITNKSLETLRSQESPCSTTFPVSDRKDALLNIPTVVDDEFQHTEELAGVSSWSDFFYLFHFSDIPLIFGTLIFTCLSAALEPLMTWTTGKVFDALSQYATSQITLGKMISLINFNSLLITIFGLASCVFSFGVRFLWQYLSAIAGKRARSLCFHVLSSKSSTFYSLTESKSGLVNSVDRCIQFYEKSISLPMFHIAENLAISLSCLIISFRYSWSLTLVVLASYPIIILVVGFINSFLSSAYEKDRKSSEKAASILEKSISAIQTVIFHSMQDTEYRYFADACSTSSKSFLRFSFLDAFQGGVSQFFLYSVFFQGLWFGNHLATTKRVNVGQVVTVFGSCLSVASSLQQILPAIPDLIKGKFSSHFIKTLCESHDPIEAAKRSAAKIKSISFERGFRFDNVSFAYPSRDENLFSLINVSVFIPFGELVHIIGPSGSGKSTFISLLLRYFSPTYGNIYLDDFPLEEIDEHVLGSTITLVCQQPVIFDMTIRENIIMRNENASESDFEEVCRLALVDEFALTFDQSYDTPCKEASLSGGQQQRIALARALLRDTEILILDEPTSALDPITKNLVMDAIRAHRKGKTTLVITHDMSQINNDELVLVIDKGHLIQRCARKELVLFEDFENNVSIDEKVLKEEADNPFILPNEESLLEKYWINYNESFSQLSRESLFTSLESPFTDIESPTIVSRRKIVEQRKLRMEKESFQETNVDQTFHLFDDKEHACSLTLIFKSIWKVKKLRWFFLLGLLTSLIQGASVPIFAYVISKCLNLFMQIDPSIGVAFWSSMVLVVAAGSGASYFFSHYIFSISAKIWCDHYRLLAVKVLFTQDQAWFDQIENYPLVLSKILVNNISDMRNMISSLIEEVFIAFTMAIIGIAWSFATGWRLAAVLVAVSPILCLTSRMFSYIYVSTERMCQDVVISTTSILHKTIVNLDTIKGYSVLSFFRENHKNSLRKSWEAFKRRAFWTSLGFAINNSLLYFVRALLFYCSSIFISKEFYTVEQMVQVLSLATFTLLMASTCIMSLPNVSASRIATSRVLKLSSLKPGNLHKSGYLKFPLVGKIEFDGVSFAYPDSERNHLALNNVSLSIEAREKVAIVGISGSGKSTLVELLRKTYPSEDIYIDGYPLTNIDTNWLLKKVAIVDQKPHLLGSTILESLLYGVDRDINSVMDALDKTYMTEVIQNLPNGLDTPLLEFSKNFSGGQIQRLAFARALLRNPRLLILDECTSALDSKSSLLLEKTIQNLSCTVLIITHQPSLMKLADRIIVMDSGIVKESGSFDELMNRHTHFWKLIHRGEWIE.

The segment at 1-29 is disordered; sequence MHIHSDLSLPQFEHASIDPPSYSPQKSSF. Residues 1-91 lie on the Cytoplasmic side of the membrane; it reads MHIHSDLSLP…ELAGVSSWSD (91 aa). The helical transmembrane segment at 92-112 threads the bilayer; the sequence is FFYLFHFSDIPLIFGTLIFTC. Residues 104 to 396 enclose the ABC transmembrane type-1 1 domain; sequence IFGTLIFTCL…ILPAIPDLIK (293 aa). At 113 to 153 the chain is on the extracellular side; sequence LSAALEPLMTWTTGKVFDALSQYATSQITLGKMISLINFNS. Residues 154–174 traverse the membrane as a helical segment; it reads LLITIFGLASCVFSFGVRFLW. Topologically, residues 175 to 250 are cytoplasmic; that stretch reads QYLSAIAGKR…SCLIISFRYS (76 aa). A helical membrane pass occupies residues 251 to 271; sequence WSLTLVVLASYPIIILVVGFI. At 272–778 the chain is on the extracellular side; that stretch reads NSFLSSAYEK…KSIWKVKKLR (507 aa). The region spanning 433–668 is the ABC transporter 1 domain; that stretch reads FRFDNVSFAY…EDFENNVSID (236 aa). Asn-437 and Asn-454 each carry an N-linked (GlcNAc...) asparagine glycan. 469 to 476 contributes to the ATP binding site; it reads GPSGSGKS. Residues Asn-536, Asn-664, and Asn-697 are each glycosylated (N-linked (GlcNAc...) asparagine). Residues 779-799 traverse the membrane as a helical segment; that stretch reads WFFLLGLLTSLIQGASVPIFA. The ABC transmembrane type-1 2 domain maps to 781-1066; sequence FLLGLLTSLI…CIMSLPNVSA (286 aa). Residues 800 to 897 lie on the Cytoplasmic side of the membrane; the sequence is YVISKCLNLF…ISDMRNMISS (98 aa). A helical transmembrane segment spans residues 898–918; the sequence is LIEEVFIAFTMAIIGIAWSFA. Over 919–1336 the chain is Extracellular; sequence TGWRLAAVLV…KLIHRGEWIE (418 aa). N-linked (GlcNAc...) asparagine glycans are attached at residues Asn-1011, Asn-1063, and Asn-1120. The ABC transporter 2 domain maps to 1099-1331; the sequence is IEFDGVSFAY…HTHFWKLIHR (233 aa). 1135 to 1142 contributes to the ATP binding site; that stretch reads GISGSGKS. N-linked (GlcNAc...) asparagine glycosylation is found at Asn-1235 and Asn-1280.

Belongs to the ABC transporter superfamily. Alpha-factor sex pheromone exporter (TC 3.A.1.206) family.

The protein resides in the membrane. In terms of biological role, required in S.pombe M (minus) cells for production of M-factor pheromone. Involved in the transport of the farnesyl-derivation of the M-factor pheromone. The chain is Mating factor M secretion protein mam1 (mam1) from Schizosaccharomyces pombe (strain 972 / ATCC 24843) (Fission yeast).